A 1344-amino-acid polypeptide reads, in one-letter code: DEAD-box ATP-dependent RNA helicase FANCM (1344 aa).

Positions 39 to 61 (SSSHFTPLANPPITANLTKPPAK) are disordered. A Helicase ATP-binding domain is found at 124–292 (ITKTALFSNT…GIIDNLQIST (169 aa)). 137-144 (LPTGLGKT) is an ATP binding site. The DEAH box signature appears at 240-243 (DEAH). Positions 450–621 (KLSKMLEILV…SFNFHPSPRM (172 aa)) constitute a Helicase C-terminal domain. 4 disordered regions span residues 765 to 790 (VNTS…KDYE), 1110 to 1148 (EVSS…TQAE), 1183 to 1218 (YSAG…SNQD), and 1307 to 1344 (KQRS…LGLW). The span at 1118 to 1135 (SADENEDVTGDSFEDSFI) shows a compositional bias: acidic residues. Positions 1207 to 1218 (TPKTTNSESNQD) are enriched in polar residues. The segment covering 1308-1318 (QRSEAKEKEDA) has biased composition (basic and acidic residues).

It belongs to the DEAD box helicase family. DEAH subfamily. FANCM sub-subfamily.

Its subcellular location is the nucleus. The enzyme catalyses ATP + H2O = ADP + phosphate + H(+). Its function is as follows. Involved in ordered homologous recombination (HR) events in somatic and meiotic cells. Involved in the suppression of spontaneous HR events in somatic cells. Has an opposite function to the DNA binding cofactor MHF1 which promotes spontaneous HR. Functions in replicative repair independently of MHF1 and in a parallel pathway to the endonuclease MUS81. Acts in the same pathway as the two DNA-binding cofactors MHF1 and MHF2 to restrain class II meiotic crossover (CO), and acts exclusively with MHF1 and MHF2 during meiosis to repair DNA interstrand cross-links (ICLs). This common pathway is in parallel to the pathway that involves the RECQ4A helicase. Seems to be involved in the stabilization of recombination intermediates. Involved in DNA double-strand break (DSB) repair during meiosis. Required for synthesis-dependent strand annealing (SDSA) and to a lesser extent for single-strand annealing (SSA). May process meiotic DSB repair intermediates, possibly D-loops, driving them toward noncrossover (NCO) resolution. In Arabidopsis thaliana (Mouse-ear cress), this protein is DEAD-box ATP-dependent RNA helicase FANCM.